The chain runs to 461 residues: pre-mRNA splicing regulator USH1G (461 aa).

ANK repeat units follow at residues 31-60 (DGMT…DPDK), 64-93 (WGNT…NIWC), and 97-126 (DYHT…KQSS). Disordered regions lie at residues 208–243 (GTAR…SARS) and 332–368 (EDGG…DRSC). Positions 210–222 (ARGKTKMQKKLER) are enriched in basic residues. An SAM domain is found at 385–447 (LEPETSPLET…KILGAVRRRR (63 aa)). Ser422 carries the phosphoserine; by CK2 modification.

Part of a complex composed of USH1C, USH1G and MYO7A. Interacts with USH1C (via the first PDZ domain). Interacts with PDZD7. Interacts with CDH23 and PCDH15; these interactions may recruit USH1G to the plasma membrane. Interacts with intraflagellar transport proteins IFT20, IFT52 and IFT57. Interacts with splicing factors SF3B1, PRPF6, PRPF31 and SON. Interacts with the U4/U6.U5 tri-small nuclear ribonucleoprotein (tri-snRNP) complex in the presence of pre-mRNAs. Interacts (via SAM domain) with MAGI2 (via PDZ 6 domain); the interaction is triggered by phosphorylation of USH1G by CK2 and negatively regulates MAGI2-mediated endocytosis. Expressed in vestibule of the inner ear, eye and small intestine.

It localises to the cytoplasm. The protein resides in the cytosol. It is found in the cytoskeleton. The protein localises to the cell membrane. Its subcellular location is the cell projection. It localises to the cilium. The protein resides in the nucleus speckle. It is found in the nucleus. The protein localises to the cajal body. Its subcellular location is the microtubule organizing center. It localises to the centrosome. The protein resides in the photoreceptor inner segment. In terms of biological role, plays a role in pre-mRNA splicing by regulating the release and transfer of U4/U6.U5 tri-small nuclear ribonucleoprotein (tri-snRNP) complexes from their assembly site in Cajal bodies to nuclear speckles, thereby contributing to the assembly of the pre-catalytic spliceosome on target pre-mRNAs. May also participate in recycling of snRNPs back to Cajal bodies during splicing. Plays a role in regulating MAGI2-mediated endocytosis. Anchoring/scaffolding protein that is a part of the functional network formed by USH1C, USH1G, CDH23 and MYO7A that mediates mechanotransduction in cochlear hair cells. Required for normal development and maintenance of cochlear hair cell bundles. Required for normal hearing. This is pre-mRNA splicing regulator USH1G (USH1G) from Homo sapiens (Human).